A 266-amino-acid chain; its full sequence is Vitamin B12-binding protein (266 aa).

The first 22 residues, 1-22 (MAKSLFRALVALSFLAPLWLNA), serve as a signal peptide directing secretion. The region spanning 25 to 266 (RVITLSPANT…QLCNALSQVD (242 aa)) is the Fe/B12 periplasmic-binding domain. Residues tyrosine 50 and 242–246 (DWFER) each bind cyanocob(III)alamin. An intrachain disulfide couples cysteine 183 to cysteine 259.

It belongs to the BtuF family. In terms of assembly, the complex is composed of two ATP-binding proteins (BtuD), two transmembrane proteins (BtuC) and a solute-binding protein (BtuF).

The protein resides in the periplasm. Its function is as follows. Part of the ABC transporter complex BtuCDF involved in vitamin B12 import. Binds vitamin B12 and delivers it to the periplasmic surface of BtuC. The polypeptide is Vitamin B12-binding protein (btuF) (Escherichia coli (strain K12)).